Reading from the N-terminus, the 295-residue chain is 4-diphosphocytidyl-2-C-methyl-D-erythritol kinase (295 aa).

Lys22 is an active-site residue. 106 to 116 (PAGGGFGGGSS) contributes to the ATP binding site. Asp148 is an active-site residue.

This sequence belongs to the GHMP kinase family. IspE subfamily.

It catalyses the reaction 4-CDP-2-C-methyl-D-erythritol + ATP = 4-CDP-2-C-methyl-D-erythritol 2-phosphate + ADP + H(+). It participates in isoprenoid biosynthesis; isopentenyl diphosphate biosynthesis via DXP pathway; isopentenyl diphosphate from 1-deoxy-D-xylulose 5-phosphate: step 3/6. Its function is as follows. Catalyzes the phosphorylation of the position 2 hydroxy group of 4-diphosphocytidyl-2C-methyl-D-erythritol. In Xanthomonas axonopodis pv. citri (strain 306), this protein is 4-diphosphocytidyl-2-C-methyl-D-erythritol kinase.